A 912-amino-acid chain; its full sequence is Ubiquitin carboxyl-terminal hydrolase 3 (912 aa).

A compositionally biased stretch (basic and acidic residues) spans 1 to 11; that stretch reads MNMQDANKEES. Disordered stretches follow at residues 1-30, 68-176, 241-384, and 396-417; these read MNMQ…TNMQ, IYHQ…SYSS, NSSV…TTAG, and GKSS…YVPP. Low complexity-rich tracts occupy residues 82-95, 102-140, and 159-176; these read NNIN…NNNI, SNGI…SNNH, and TNSS…SYSS. Positions 249 to 259 are enriched in basic residues; sequence AHHHTKSHSIP. Over residues 260–310 the composition is skewed to basic and acidic residues; that stretch reads KHNEEVKTETHGEEEDAHDKKPHASKDAHELKKKTEVKKEDAKQDRNEKVI. The segment covering 335-355 has biased composition (low complexity); the sequence is SKTSSPSPSPPAAKSWSAIAS. Composition is skewed to polar residues over residues 361–384 and 396–406; these read RQAS…TTAG and GKSSSPLLSKQ. A USP domain is found at 460-911; it reads RGIINRANIC…TAYILMYQKR (452 aa). The Nucleophile role is filled by C469. H861 acts as the Proton acceptor in catalysis.

Belongs to the peptidase C19 family. Heterotetramer with BRE5; contains two molecules of BRE5 and two molecules of UBP3. Forms a complex composed of CDC48, DOA1, deubiquitinase UBP3 and probably BRE5. Within the complex interacts directly with DOA1 and CDC48 in a BRE5-independent manner.

The catalysed reaction is Thiol-dependent hydrolysis of ester, thioester, amide, peptide and isopeptide bonds formed by the C-terminal Gly of ubiquitin (a 76-residue protein attached to proteins as an intracellular targeting signal).. Has an ATP-independent isopeptidase activity, cleaving at the C-terminus of the ubiquitin moiety in natural or engineered linear fusion proteins, irrespective of their size or the presence of an N-terminal extension to ubiquitin. Plays a role in regulation of silencing by interacting with SIR4. Also, in conjunction with BRE5, cleaves ubiquitin, leading to the subsequent mono-ubiquitination of SEC23. Required for ribophagy, a process which relocalizes ribosomal particles into the vacuole for degradation in response to starvation. The protein is Ubiquitin carboxyl-terminal hydrolase 3 (UBP3) of Saccharomyces cerevisiae (strain ATCC 204508 / S288c) (Baker's yeast).